Reading from the N-terminus, the 82-residue chain is MFFKKITLIPFVMLINLYRYCISPFIPARCRYYPTCSEYALEALKTHGILKGLYLTTRRLLRCHPLSKRDYYDLVPCKNKKG.

Belongs to the UPF0161 family.

It is found in the cell inner membrane. In terms of biological role, could be involved in insertion of integral membrane proteins into the membrane. This Francisella tularensis subsp. holarctica (strain LVS) protein is Putative membrane protein insertion efficiency factor.